The sequence spans 261 residues: Cytochrome c oxidase subunit 3 (261 aa).

Topologically, residues 1–15 (MAHQAHAYHMVDPSP) are mitochondrial matrix. A helical transmembrane segment spans residues 16-34 (WPLTGAIAALLMTSGLAIW). Residues 35–40 (FHFHST) are Mitochondrial intermembrane-facing. The helical transmembrane segment at 41–66 (TLMTLGLILLLLTMYQWWRDIIREGT) threads the bilayer. Residues 67-72 (FQGHHT) lie on the Mitochondrial matrix side of the membrane. The chain crosses the membrane as a helical span at residues 73–105 (PPVQKGLRYGMILFITSEVFFFLGFFWAFYHSS). Topologically, residues 106 to 128 (LAPTPELGGCWPPTGITPLDPFE) are mitochondrial intermembrane. Residues 129–152 (VPLLNTAVLLASGVTVTWAHHSIM) traverse the membrane as a helical segment. Residues 153–155 (EGE) lie on the Mitochondrial matrix side of the membrane. Residues 156–183 (RKQAIQSLALTILLGLYFTALQAMEYYE) traverse the membrane as a helical segment. At 184-190 (APFTIAD) the chain is on the mitochondrial intermembrane side. The helical transmembrane segment at 191–223 (GVYGSTFFVATGFHGLHVIIGSTFLAVCLLRQI) threads the bilayer. The Mitochondrial matrix portion of the chain corresponds to 224 to 232 (QYHFTSEHH). A helical membrane pass occupies residues 233 to 256 (FGFEAAAWYWHFVDVVWLFLYVSI). Over 257 to 261 (YWWGS) the chain is Mitochondrial intermembrane.

Belongs to the cytochrome c oxidase subunit 3 family. Component of the cytochrome c oxidase (complex IV, CIV), a multisubunit enzyme composed of 14 subunits. The complex is composed of a catalytic core of 3 subunits MT-CO1, MT-CO2 and MT-CO3, encoded in the mitochondrial DNA, and 11 supernumerary subunits COX4I, COX5A, COX5B, COX6A, COX6B, COX6C, COX7A, COX7B, COX7C, COX8 and NDUFA4, which are encoded in the nuclear genome. The complex exists as a monomer or a dimer and forms supercomplexes (SCs) in the inner mitochondrial membrane with NADH-ubiquinone oxidoreductase (complex I, CI) and ubiquinol-cytochrome c oxidoreductase (cytochrome b-c1 complex, complex III, CIII), resulting in different assemblies (supercomplex SCI(1)III(2)IV(1) and megacomplex MCI(2)III(2)IV(2)).

It is found in the mitochondrion inner membrane. It catalyses the reaction 4 Fe(II)-[cytochrome c] + O2 + 8 H(+)(in) = 4 Fe(III)-[cytochrome c] + 2 H2O + 4 H(+)(out). In terms of biological role, component of the cytochrome c oxidase, the last enzyme in the mitochondrial electron transport chain which drives oxidative phosphorylation. The respiratory chain contains 3 multisubunit complexes succinate dehydrogenase (complex II, CII), ubiquinol-cytochrome c oxidoreductase (cytochrome b-c1 complex, complex III, CIII) and cytochrome c oxidase (complex IV, CIV), that cooperate to transfer electrons derived from NADH and succinate to molecular oxygen, creating an electrochemical gradient over the inner membrane that drives transmembrane transport and the ATP synthase. Cytochrome c oxidase is the component of the respiratory chain that catalyzes the reduction of oxygen to water. Electrons originating from reduced cytochrome c in the intermembrane space (IMS) are transferred via the dinuclear copper A center (CU(A)) of subunit 2 and heme A of subunit 1 to the active site in subunit 1, a binuclear center (BNC) formed by heme A3 and copper B (CU(B)). The BNC reduces molecular oxygen to 2 water molecules using 4 electrons from cytochrome c in the IMS and 4 protons from the mitochondrial matrix. This Cyprinus carpio (Common carp) protein is Cytochrome c oxidase subunit 3 (mt-co3).